Consider the following 591-residue polypeptide: Maintenance of mitochondrial morphology protein 1 (591 aa).

Residues 1–83 (MGFNIPWNGT…AQPSLSFTQG (83 aa)) lie on the Lumenal side of the membrane. The helical transmembrane segment at 84–104 (LLVGQLSVVLLIGAFIKFFIF) threads the bilayer. Residues 105–591 (GEAPPPPSRS…GSMPDSVAVT (487 aa)) are Cytoplasmic-facing. Disordered stretches follow at residues 138–159 (PRTLREKPSTSNILRPVPSSST), 170–189 (YSATPTNPTSKHGRSRVHHS), 334–398 (PGTS…KHAH), and 479–591 (EAEA…VAVT). Polar residues-rich tracts occupy residues 146 to 159 (STSNILRPVPSSST) and 170 to 179 (YSATPTNPTS). Residues 180 to 189 (KHGRSRVHHS) are compositionally biased toward basic residues. Residues 192 to 462 (QPESLDWFNV…EPRVQVVGLP (271 aa)) enclose the SMP-LTD domain. Over residues 336 to 371 (TSDQTMGPSASPPNQSTSTETASINDQTSEGQSTQR) the composition is skewed to polar residues. A compositionally biased stretch (low complexity) spans 379–389 (PTNSTPTAATA). Composition is skewed to gly residues over residues 496–525 (TAGGDGMRGRGGGGGGGGLRGNSSGRGMGY) and 536–550 (GDGGTGVVQGQGAGG). Positions 563–578 (GGDDGEGPGRRSDERF) are enriched in basic and acidic residues.

This sequence belongs to the MMM1 family. As to quaternary structure, homodimer. Component of the ER-mitochondria encounter structure (ERMES) or MDM complex, composed of MMM1, MDM10, MDM12 and MDM34. An MMM1 homodimer associates with one molecule of MDM12 on each side in a pairwise head-to-tail manner, and the SMP-LTD domains of MMM1 and MDM12 generate a continuous hydrophobic tunnel for phospholipid trafficking.

Its subcellular location is the endoplasmic reticulum membrane. Functionally, component of the ERMES/MDM complex, which serves as a molecular tether to connect the endoplasmic reticulum (ER) and mitochondria. Components of this complex are involved in the control of mitochondrial shape and protein biogenesis, and function in nonvesicular lipid trafficking between the ER and mitochondria. The MDM12-MMM1 subcomplex functions in the major beta-barrel assembly pathway that is responsible for biogenesis of all outer membrane beta-barrel proteins, and acts in a late step after the SAM complex. The MDM10-MDM12-MMM1 subcomplex further acts in the TOM40-specific pathway after the action of the MDM12-MMM1 complex. Essential for establishing and maintaining the structure of mitochondria and maintenance of mtDNA nucleoids. The protein is Maintenance of mitochondrial morphology protein 1 of Ajellomyces capsulatus (strain G186AR / H82 / ATCC MYA-2454 / RMSCC 2432) (Darling's disease fungus).